Reading from the N-terminus, the 385-residue chain is 1-deoxy-D-xylulose 5-phosphate reductoisomerase (385 aa).

Thr10, Gly11, Ser12, Ile13, Lys37, and Asn124 together coordinate NADPH. Residue Lys125 participates in 1-deoxy-D-xylulose 5-phosphate binding. Glu126 is an NADPH binding site. Asp150 provides a ligand contact to Mn(2+). The 1-deoxy-D-xylulose 5-phosphate site is built by Ser151, Glu152, Ser176, and His199. Glu152 is a Mn(2+) binding site. Residue Gly205 participates in NADPH binding. Residues Ser212, Asn217, Lys218, and Glu221 each coordinate 1-deoxy-D-xylulose 5-phosphate. Residue Glu221 participates in Mn(2+) binding.

This sequence belongs to the DXR family. Mg(2+) serves as cofactor. Mn(2+) is required as a cofactor.

It carries out the reaction 2-C-methyl-D-erythritol 4-phosphate + NADP(+) = 1-deoxy-D-xylulose 5-phosphate + NADPH + H(+). It participates in isoprenoid biosynthesis; isopentenyl diphosphate biosynthesis via DXP pathway; isopentenyl diphosphate from 1-deoxy-D-xylulose 5-phosphate: step 1/6. Catalyzes the NADPH-dependent rearrangement and reduction of 1-deoxy-D-xylulose-5-phosphate (DXP) to 2-C-methyl-D-erythritol 4-phosphate (MEP). This Clostridium botulinum (strain Loch Maree / Type A3) protein is 1-deoxy-D-xylulose 5-phosphate reductoisomerase.